The primary structure comprises 302 residues: tRNA pseudouridine synthase B (302 aa).

Residue Asp47 is the Nucleophile of the active site.

Belongs to the pseudouridine synthase TruB family. Type 1 subfamily.

It carries out the reaction uridine(55) in tRNA = pseudouridine(55) in tRNA. Responsible for synthesis of pseudouridine from uracil-55 in the psi GC loop of transfer RNAs. The protein is tRNA pseudouridine synthase B of Methylobacillus flagellatus (strain ATCC 51484 / DSM 6875 / VKM B-1610 / KT).